The primary structure comprises 152 residues: Protein Smg homolog (152 aa).

This sequence belongs to the Smg family.

The polypeptide is Protein Smg homolog (Bordetella petrii (strain ATCC BAA-461 / DSM 12804 / CCUG 43448)).